An 86-amino-acid polypeptide reads, in one-letter code: MSRIAILLFVAFLLVAGISAKSTAHFKKNVLADLFKERRFNAKRDPAGSTCVNIDVDSFCDGMAERGACNIIPQMATNCAKACNSC.

Positions 1 to 20 (MSRIAILLFVAFLLVAGISA) are cleaved as a signal peptide. Residues 21–42 (KSTAHFKKNVLADLFKERRFNA) constitute a propeptide that is removed on maturation. The ShKT domain maps to 51 to 86 (CVNIDVDSFCDGMAERGACNIIPQMATNCAKACNSC). 3 disulfide bridges follow: Cys-51-Cys-86, Cys-60-Cys-79, and Cys-69-Cys-83.

The protein belongs to the sea anemone type 1 potassium channel toxin family. Type 1b subfamily.

It is found in the secreted. The protein resides in the nematocyst. Inhibits voltage-gated potassium channels (Kv1/KCNA). This Anemonia viridis (Snakelocks anemone) protein is U-actitoxin-Avd10a.